The sequence spans 305 residues: Glycerol-3-phosphate dehydrogenase [NAD(P)+] (305 aa).

Residues phenylalanine 10, arginine 29, and lysine 87 each contribute to the NADPH site. Residues lysine 87, glycine 115, and serine 117 each coordinate sn-glycerol 3-phosphate. Residue alanine 119 participates in NADPH binding. The sn-glycerol 3-phosphate site is built by lysine 170, aspartate 223, serine 233, arginine 234, and asparagine 235. Lysine 170 functions as the Proton acceptor in the catalytic mechanism. Arginine 234 lines the NADPH pocket. Position 255 (glutamate 255) interacts with NADPH.

Belongs to the NAD-dependent glycerol-3-phosphate dehydrogenase family.

The protein localises to the cytoplasm. It catalyses the reaction sn-glycerol 3-phosphate + NAD(+) = dihydroxyacetone phosphate + NADH + H(+). The catalysed reaction is sn-glycerol 3-phosphate + NADP(+) = dihydroxyacetone phosphate + NADPH + H(+). Its pathway is membrane lipid metabolism; glycerophospholipid metabolism. Functionally, catalyzes the reduction of the glycolytic intermediate dihydroxyacetone phosphate (DHAP) to sn-glycerol 3-phosphate (G3P), the key precursor for phospholipid synthesis. This is Glycerol-3-phosphate dehydrogenase [NAD(P)+] from Cereibacter sphaeroides (strain ATCC 17023 / DSM 158 / JCM 6121 / CCUG 31486 / LMG 2827 / NBRC 12203 / NCIMB 8253 / ATH 2.4.1.) (Rhodobacter sphaeroides).